The primary structure comprises 675 residues: Protein distal antenna (675 aa).

The HTH psq-type domain maps to 5-56 (TKGKRPLRHLTATDKIDAIQRIHDGESKASVARDIGVPESTLRGWCKNEEKL). Positions 32 to 52 (KASVARDIGVPESTLRGWCKN) form a DNA-binding region, H-T-H motif. 5 disordered regions span residues 239 to 269 (QSLRNARPKANTSQSPRTSNLSDVNGDKNPS), 337 to 393 (LYSS…PEDT), 458 to 534 (LNII…SKCN), 546 to 596 (FQNP…AHKS), and 655 to 675 (ERQQQNAVSSGEERTRVRRRK). Over residues 339 to 368 (SSMPRPSSPQQSSSPPQQHQQVQHHPSTQT) the composition is skewed to low complexity. Pro residues predominate over residues 369 to 384 (PTPPIVSTPQPTPPSS). Basic and acidic residues predominate over residues 469 to 478 (VKSEPEDLSN). The span at 479-493 (HNHSSSNAAAVAAPA) shows a compositional bias: low complexity. Positions 499–508 (FNPSPSTSAK) are enriched in polar residues. Residues 513 to 528 (QEDDEEQAGPADDESP) show a composition bias toward acidic residues. A compositionally biased stretch (low complexity) spans 559 to 579 (NLSIRSNNSPRRRSVSPAVSN).

As to quaternary structure, homomers. Interacts with itself, danr, ey and dac to form a complex (or complexes) containing the RD factors.

It localises to the nucleus. Its function is as follows. Probable transcription factor with a role in the retinal determination (RD) network. Contributes to differentiation of antenna-specific characteristics. The chain is Protein distal antenna from Aedes aegypti (Yellowfever mosquito).